Reading from the N-terminus, the 532-residue chain is UDP-glucuronosyltransferase 1A4 (532 aa).

The first 27 residues, M1–G27, serve as a signal peptide directing secretion. Residues N141 and N295 are each glycosylated (N-linked (GlcNAc...) asparagine). The helical transmembrane segment at V490–F506 threads the bilayer.

The protein belongs to the UDP-glycosyltransferase family. As to quaternary structure, homodimers. Homooligomer. Interacts with UGT1A1, UGT1A3, UGT1A6, UGT1A7, UGT1A8, UGT1A9 and UGT1A10 to form heterodimers.

The protein resides in the endoplasmic reticulum membrane. It catalyses the reaction glucuronate acceptor + UDP-alpha-D-glucuronate = acceptor beta-D-glucuronoside + UDP + H(+). The catalysed reaction is calcidiol + UDP-alpha-D-glucuronate = calcidiol 25-O-(beta-D-glucuronide) + UDP + H(+). The enzyme catalyses calcidiol + UDP-alpha-D-glucuronate = calcidiol 3-O-(beta-D-glucuronide) + UDP + H(+). It carries out the reaction calcitriol + UDP-alpha-D-glucuronate = calcitriol 25-O-(beta-D-glucuronide) + UDP + H(+). It catalyses the reaction (5Z,8Z,11Z,14Z)-eicosatetraenoate + UDP-alpha-D-glucuronate = O-[(5Z),(8Z),(11Z),(14Z)-eicosatetraenoyl]-beta-D-glucuronate + UDP. The catalysed reaction is 15-hydroxy-(5Z,8Z,11Z,13E)-eicosatetraenoate + UDP-alpha-D-glucuronate = 15-O-(beta-D-glucuronosyl)-(5Z,8Z,11Z,14Z)-eicosatetraenoate + UDP + H(+). The enzyme catalyses 20-hydroxy-(5Z,8Z,11Z,14Z)-eicosatetraenoate + UDP-alpha-D-glucuronate = 20-O-(beta-D-glucuronosyl)-(5Z,8Z,11Z,14Z)-eicosatetraenoate + UDP + H(+). UDP-glucuronosyltransferase (UGT) that catalyzes phase II biotransformation reactions in which lipophilic substrates are conjugated with glucuronic acid to increase the metabolite's water solubility, thereby facilitating excretion into either the urine or bile. Essential for the elimination and detoxification of drugs, xenobiotics and endogenous compounds. Involved in the glucuronidation of calcidiol, which is the major circulating form of vitamin D3 essential for the regulation of calcium and phosphate homeostasis. Also glucuronidates the biologically active form of vitamin D3, calcitriol, probably leading to its biliary transport and intestinal reabsorption. Involved in the glucuronidation of arachidonic acid (AA) and AA-derived eicosanoids including 15-HETE, 20-HETE and PGB1. This Oryctolagus cuniculus (Rabbit) protein is UDP-glucuronosyltransferase 1A4 (Ugt1a4).